A 395-amino-acid chain; its full sequence is Phosphopentomutase (395 aa).

Positions 14, 286, 291, 327, 328, and 339 each coordinate Mn(2+).

The protein belongs to the phosphopentomutase family. It depends on Mn(2+) as a cofactor.

It localises to the cytoplasm. It carries out the reaction 2-deoxy-alpha-D-ribose 1-phosphate = 2-deoxy-D-ribose 5-phosphate. The catalysed reaction is alpha-D-ribose 1-phosphate = D-ribose 5-phosphate. The protein operates within carbohydrate degradation; 2-deoxy-D-ribose 1-phosphate degradation; D-glyceraldehyde 3-phosphate and acetaldehyde from 2-deoxy-alpha-D-ribose 1-phosphate: step 1/2. Functionally, isomerase that catalyzes the conversion of deoxy-ribose 1-phosphate (dRib-1-P) and ribose 1-phosphate (Rib-1-P) to deoxy-ribose 5-phosphate (dRib-5-P) and ribose 5-phosphate (Rib-5-P), respectively. This chain is Phosphopentomutase, found in Staphylococcus saprophyticus subsp. saprophyticus (strain ATCC 15305 / DSM 20229 / NCIMB 8711 / NCTC 7292 / S-41).